Reading from the N-terminus, the 2090-residue chain is MDEVEQDQHEARLKELFDSFDTTGTGSLGQEELTDLCHMLSLEEVAPVLQQTLLQDNLLGRVHFDQFKEALILILSRTLSNEEHFQEPDCSLEAQPKYVRGGKRYGRRSLPEFQESVEEFPEVTVIEPLDEEARPSHIPAGDCSEHWKTQRSEEYEAEGQLRFWNPDDLNASQSGSSPPQDWIEEKLQEVCEDLGITRDGHLNRKKLVSICEQYGLQNVDGEMLEEVFHNLDPDGTMSVEDFFYGLFKNGKSLTPSASTPYRQLKRHLSMQSFDESGRRTTTSSAMTSTIGFRVFSCLDDGMGHASVERILDTWQEEGIENSQEILKALDFSLDGNINLTELTLALENELLVTKNSIHQAALASFKAEIRHLLERVDQVVREKEKLRSDLDKAEKLKSLMASEVDDHHAAIERRNEYNLRKLDEEYKERIAALKNELRKEREQILQQAGKQRLELEQEIEKAKTEENYIRDRLALSLKENSRLENELLENAEKLAEYENLTNKLQRNLENVLAEKFGDLDPSSAEFFLQEERLTQMRNEYERQCRVLQDQVDELQSELEEYRAQGRVLRLPLKNSPSEEVEANSGGIEPEHGLGSEECNPLNMSIEAELVIEQMKEQHHRDICCLRLELEDKVRHYEKQLDETVVSCKKAQENMKQRHENETHTLEKQISDLKNEIAELQGQAAVLKEAHHEATCRHEEEKKQLQVKLEEEKTHLQEKLRLQHEMELKARLTQAQASFEREREGLQSSAWTEEKVRGLTQELEQFHQEQLTSLVEKHTLEKEELRKELLEKHQRELQEGREKMETECNRRTSQIEAQFQSDCQKVTERCESALQSLEGRYRQELKDLQEQQREEKSQWEFEKDELTQECAEAQELLKETLKREKTTSLVLTQEREMLEKTYKEHLNSMVVERQQLLQDLEDLRNVSETQQSLLSDQILELKSSHKRELREREEVLCQAGASEQLASQRLERLEMEHDQERQEMMSKLLAMENIHKATCETADRERAEMSTEISRLQSKIKEMQQATSPLSMLQSGCQVIGEEEVEGDGALSLLQQGEQLLEENGDVLLSLQRAHEQAVKENVKMATEISRLQQRLQKLEPGLVMSSCLDEPATEFFGNTAEQTEQFLQQNRTKQVEGVTRRHVLSDLEDDEVRDLGSTGTSSVQRQEVKIEESEASVEGFSELENSEETRTESWELKNQISQLQEQLMMLCADCDRASEKKQDLLFDVSVLKKKLKMLERIPEASPKYKLLYEDVSRENDCLQEELRMMETRYDEALENNKELTAEVFRLQDELKKMEEVTETFLSLEKSYDEVKIENEGLNVLVLRLQGKIEKLQESVVQRCDCCLWEASLENLEIEPDGNILQLNQTLEECVPRVRSVHHVIEECKQENQYLEGNTQLLEKVKAHEIAWLHGTIQTHQERPRVQNQVILEENTTLLGFQDKHFQHQATIAELELEKTKLQELTRKLKERVTILVKQKDVLSHGEKEEELKAMMHDLQITCSEMQQKVELLRYESEKLQQENSILRNEITTLNEEDSISNLKLGTLNGSQEEMWQKTETVKQENAAVQKMVENLKKQISELKIKNQQLDLENTELSQKNSQNQEKLQELNQRLTEMLCQKEKEPGNSALEEREQEKFNLKEELERCKVQSSTLVSSLEAELSEVKIQTHIVQQENHLLKDELEKMKQLHRCPDLSDFQQKISSVLSYNEKLLKEKEALSEELNSCVDKLAKSSLLEHRIATMKQEQKSWEHQSASLKSQLVASQEKVQNLEDTVQNVNLQMSRMKSDLRVTQQEKEALKQEVMSLHKQLQNAGGKSWAPEIATHPSGLHNQQKRLSWDKLDHLMNEEQQLLWQENERLQTMVQNTKAELTHSREKVRQLESNLLPKHQKHLNPSGTMNPTEQEKLSLKRECDQFQKEQSPANRKVSQMNSLEQELETIHLENEGLKKKQVKLDEQLMEMQHLRSTATPSPSPHAWDLQLLQQQACPMVPREQFLQLQRQLLQAERINQHLQEELENRTSETNTPQGNQEQLVTVMEERMIEVEQKLKLVKRLLQEKVNQLKEQVSLPGHLCSPTSHSSFNSSFTSLYCH.

EF-hand domains are found at residues 8 to 43 (QHEARLKELFDSFDTTGTGSLGQEELTDLCHMLSLE) and 42 to 77 (LEEVAPVLQQTLLQDNLLGRVHFDQFKEALILILSR). At serine 152 the chain carries Phosphoserine. EF-hand domains follow at residues 182 to 217 (WIEEKLQEVCEDLGITRDGHLNRKKLVSICEQYGLQ) and 219 to 252 (VDGEMLEEVFHNLDPDGTMSVEDFFYGLFKNGKS). 245-252 (GLFKNGKS) serves as a coordination point for GTP. Serine 269 carries the phosphoserine modification. 300–304 (DGMGH) contacts GTP. An EF-hand 5 domain is found at 317-352 (EGIENSQEILKALDFSLDGNINLTELTLALENELLV). A coiled-coil region spans residues 357 to 570 (IHQAALASFK…YRAQGRVLRL (214 aa)). A GTP-binding site is contributed by 420–423 (RKLD). The tract at residues 574 to 595 (NSPSEEVEANSGGIEPEHGLGS) is disordered. Coiled coils occupy residues 625–1027 (LRLE…QATS), 1068–1099 (LSLQRAHEQAVKENVKMATEISRLQQRLQKLE), 1181–1341 (SELE…SVVQ), and 1441–1816 (QDKH…AGGK). An important for interaction with CEP170 region spans residues 802 to 1505 (KMETECNRRT…HDLQITCSEM (704 aa)). A disordered region spans residues 1152-1190 (VRDLGSTGTSSVQRQEVKIEESEASVEGFSELENSEETR). 2 positions are modified to phosphoserine: serine 1550 and serine 1837. 2 coiled-coil regions span residues 1854-1885 (QENERLQTMVQNTKAELTHSREKVRQLESNLL) and 1922-2067 (ANRK…QVSL).

As to quaternary structure, homooligomer. Interacts with GSK3B/GSK3-beta via its C-terminal domain. Interacts with C14ORF166, such interaction may prevent its phosphorylation by GSK3B. Interacts with AUNIP (via N-terminus). Identified in a complex with AUNIP and AURKA. Interacts with CCDC120. Interacts (via C-terminus) with CEP250. Interacts with CEP170. Interacts with the gamma-tubulin ring complex component TUBGCP3. Interacts with gamma-tubulin. Isoform 6 does not interact with CEP170 or CEP250. Post-translationally, phosphorylated by AURKA/Aurora kinase A and PKA kinases but not CK2 or AURKB/ Aurora kinase B. In terms of tissue distribution, ubiquitous. Highly expressed in heart and skeletal muscle. Isoform 1 is more expressed than isoform 5.

The protein resides in the cytoplasm. Its subcellular location is the cytoskeleton. The protein localises to the microtubule organizing center. It localises to the centrosome. It is found in the centriole. Its function is as follows. Centrosomal protein required in the positioning and anchorage of the microtubule minus-end in epithelial cells. May also act as a centrosome maturation factor. May play a role in microtubule nucleation, by recruiting the gamma-tubulin ring complex to the centrosome. Overexpression does not perturb nucleation or elongation of microtubules but suppresses release of microtubules. Required for centriole organization and microtubule anchoring at the mother centriole. The chain is Ninein (NIN) from Homo sapiens (Human).